Here is a 112-residue protein sequence, read N- to C-terminus: Small ribosomal subunit protein bS6c (112 aa).

The protein belongs to the bacterial ribosomal protein bS6 family.

It localises to the plastid. The protein resides in the chloroplast. Functionally, binds together with bS18 to 16S ribosomal RNA. The sequence is that of Small ribosomal subunit protein bS6c (rps6) from Porphyra purpurea (Red seaweed).